A 130-amino-acid polypeptide reads, in one-letter code: MTSPLENLENHLEMFIENVRQIRIIVSDFQPQGQNVLNQKIQSLVTGLQEIDKLKNQIDVNVPLEVFDYIDQGRNPQLYTKDCIDKALTKNEEVKGKIDSYRKFKSNLMKELSETFPVEISKYKAIRGDE.

The protein belongs to the Mediator complex subunit 10 family. As to quaternary structure, component of the Mediator complex.

It is found in the nucleus. Component of the Mediator complex, a coactivator involved in the regulated transcription of nearly all RNA polymerase II-dependent genes. Mediator functions as a bridge to convey information from gene-specific regulatory proteins to the basal RNA polymerase II transcription machinery. Mediator is recruited to promoters by direct interactions with regulatory proteins and serves as a scaffold for the assembly of a functional preinitiation complex with RNA polymerase II and the general transcription factors. The sequence is that of Mediator of RNA polymerase II transcription subunit 10 (MED10) from Anopheles gambiae (African malaria mosquito).